An 890-amino-acid chain; its full sequence is Putative RNA-binding protein 15B (890 aa).

A disordered region spans residues 1–133 (MKRQSERDSS…AEPACPGSSA (133 aa)). Over residues 10–20 (SPSGRGSSSSA) the composition is skewed to low complexity. 2 stretches are compositionally biased toward basic and acidic residues: residues 22-34 (RPREREREAEAGG) and 66-78 (GHRDGRGTGDANH). The segment covering 86 to 99 (SGSGAGGGGRGGKA) has biased composition (gly residues). Residues serine 109 and serine 113 each carry the phosphoserine modification. Positions 113–124 (SPLPPPPPPPGA) are enriched in pro residues. In terms of domain architecture, RRM 1 spans 139–219 (KTLLISSLSP…RPLKVEPVYL (81 aa)). Residue lysine 213 forms a Glycyl lysine isopeptide (Lys-Gly) (interchain with G-Cter in SUMO2) linkage. The tract at residues 219–253 (LRGGGGSSRRSSSSSAAASTPPPGPPAPADPLGYL) is disordered. The segment covering 226–237 (SRRSSSSSAAAS) has biased composition (low complexity). The segment covering 238 to 247 (TPPPGPPAPA) has biased composition (pro residues). A phosphoserine mark is found at serine 265 and serine 267. 2 consecutive RRM domains span residues 337-414 (RNLF…YGKA) and 418-492 (TRLW…FAKA). The residue at position 532 (threonine 532) is a Phosphothreonine. A disordered region spans residues 547 to 705 (EGDWTSPSKS…KPLEEPKHET (159 aa)). Residues serine 552, serine 556, and serine 562 each carry the phosphoserine modification. Composition is skewed to basic and acidic residues over residues 573 to 616 (RSGE…ERSR) and 626 to 646 (RGSDRTPERSRKENHSSEGTK). A Nuclear localization signal motif is present at residues 593–597 (RRKRR). The span at 647–657 (ESSSNSLSNSR) shows a compositional bias: low complexity. Positions 671-703 (EAADSSHGKKARDSERNHRTTEAEPKPLEEPKH) are enriched in basic and acidic residues. Residue lysine 702 forms a Glycyl lysine isopeptide (Lys-Gly) (interchain with G-Cter in SUMO2) linkage. The region spanning 711-889 (LSEYAQTLQL…HMVIVIVRDT (179 aa)) is the SPOC domain. An interaction with Epstein-Barr virus BMLF1 region spans residues 722–890 (WNGLLVLKNS…MVIVIVRDTA (169 aa)).

The protein belongs to the RRM Spen family. As to quaternary structure, component of the WMM complex, a N6-methyltransferase complex composed of a catalytic subcomplex, named MAC, and of an associated subcomplex, named MACOM. The MAC subcomplex is composed of METTL3 and METTL14. The MACOM subcomplex is composed of WTAP, ZC3H13, CBLL1/HAKAI, VIRMA, and, in some cases of RBM15 (RBM15 or RBM15B). May interact with NCOR2. Interacts with NXF1, the interaction is required to promote mRNA export. In terms of assembly, (Microbial infection) Interacts (via the SPOC domain) with Epstein-Barr virus BMLF1 (via the N-terminus); the interaction is direct. Ubiquitously expressed.

It is found in the nucleus. Its subcellular location is the nucleoplasm. The protein resides in the nucleus speckle. It localises to the nucleus envelope. Its function is as follows. RNA-binding protein that acts as a key regulator of N6-methyladenosine (m6A) methylation of RNAs, thereby regulating different processes, such as alternative splicing of mRNAs and X chromosome inactivation mediated by Xist RNA. Associated component of the WMM complex, a complex that mediates N6-methyladenosine (m6A) methylation of RNAs, a modification that plays a role in the efficiency of mRNA splicing and RNA processing. Plays a key role in m6A methylation, possibly by binding target RNAs and recruiting the WMM complex. Involved in random X inactivation mediated by Xist RNA: acts by binding Xist RNA and recruiting the WMM complex, which mediates m6A methylation, leading to target YTHDC1 reader on Xist RNA and promoting transcription repression activity of Xist. Functions in the regulation of alternative or illicit splicing, possibly by regulating m6A methylation. Inhibits pre-mRNA splicing. Also functions as a mRNA export factor by acting as a cofactor for the nuclear export receptor NXF1. The protein is Putative RNA-binding protein 15B of Homo sapiens (Human).